Here is a 223-residue protein sequence, read N- to C-terminus: Ras-related protein Rab-32 (223 aa).

Ala-2 carries the N-acetylalanine modification. Residues Val-34, Gly-35, Lys-36, Thr-37, Ser-38, Ser-49, Gln-50, Tyr-52, and Thr-55 each contribute to the GTP site. Position 37 (Thr-37) interacts with Mg(2+). The Switch 1 signature appears at 46–60 (QLFSQHYRATIGVDF). Thr-55 contacts Mg(2+). Position 69 is a phosphoserine (Ser-69). Asp-79 is a binding site for Mg(2+). Positions 82, 141, 142, 144, 173, and 174 each coordinate GTP. The short motif at 82 to 95 (GQERFGNMTRVYYK) is the Switch 2 element. Residues 176 to 195 (NINIDEATRFLVENMLANQQ) form a PKA-RII subunit binding domain region. Residues Cys-222 and Cys-223 are each lipidated (S-geranylgeranyl cysteine).

It belongs to the small GTPase superfamily. Rab family. As to quaternary structure, interacts with ANKRD27. A decreased interaction with ANKRD27 seen in the presence of SGSM2. Interacts with LRRK2 (via N-terminus); this interaction results in stimulation of RAB10 phosphorylation by LRRK2. It depends on Mg(2+) as a cofactor. In terms of tissue distribution, widely expressed with highest levels in liver. Strong expression also found in melanocyte, platelet, mast cell and fibroblast cell lines.

It is found in the mitochondrion. It localises to the mitochondrion outer membrane. The protein localises to the cytoplasmic vesicle. The protein resides in the phagosome. Its subcellular location is the phagosome membrane. It is found in the melanosome. It localises to the melanosome membrane. It catalyses the reaction GTP + H2O = GDP + phosphate + H(+). Regulated by guanine the nucleotide exchange factor (GEF) BLOC-3 complex composed of HPS1 and HPS4 which promote the exchange of bound GDP for free GTP. Regulated by the GTPase activating protein (GAP) SGSM2/RUTBC1 which increases the GTP hydrolysis activity. Inhibited by GDP dissociation inhibitors (GDIs) which prevent Rab-GDP dissociation. Functionally, the small GTPases Rab are key regulators of intracellular membrane trafficking, from the formation of transport vesicles to their fusion with membranes. Rabs cycle between an inactive GDP-bound form and an active GTP-bound form that is able to recruit to membranes different set of downstream effectors directly responsible for vesicle formation, movement, tethering and fusion. Also acts as an A-kinase anchoring protein by binding to the type II regulatory subunit of protein kinase A and anchoring it to the mitochondrion. Also involved in synchronization of mitochondrial fission. Plays a role in the maturation of phagosomes that engulf pathogens, such as S.aureus and M.tuberculosis. Plays an important role in the control of melanin production and melanosome biogenesis. In concert with RAB38, regulates the proper trafficking of melanogenic enzymes TYR, TYRP1 and DCT/TYRP2 to melanosomes in melanocytes. Stimulates phosphorylation of RAB10 'Thr-73' by LRRK2. In Mus musculus (Mouse), this protein is Ras-related protein Rab-32.